The following is a 463-amino-acid chain: Chaperone SurA (463 aa).

The N-terminal stretch at 1–25 (MTKPFSVLLASLLVITSTVSPLASA) is a signal peptide. 2 consecutive PpiC domains span residues 174–276 (GSQY…KLVE) and 289–388 (LTEY…QRVG). Disordered regions lie at residues 329-348 (ATAKESSEDTNSRGQGGDLG) and 434-463 (GDRADADATAAPEPAAAPAAPTPPPAQPTR). Over residues 440–452 (DATAAPEPAAAPA) the composition is skewed to low complexity. Pro residues predominate over residues 453-463 (APTPPPAQPTR).

It localises to the periplasm. The enzyme catalyses [protein]-peptidylproline (omega=180) = [protein]-peptidylproline (omega=0). In terms of biological role, chaperone involved in the correct folding and assembly of outer membrane proteins. Recognizes specific patterns of aromatic residues and the orientation of their side chains, which are found more frequently in integral outer membrane proteins. May act in both early periplasmic and late outer membrane-associated steps of protein maturation. The polypeptide is Chaperone SurA (Xanthomonas campestris pv. campestris (strain 8004)).